The following is a 557-amino-acid chain: Aspartate--tRNA ligase, cytoplasmic (557 aa).

The segment covering 1-12 (MSQDENIVKAVE) has biased composition (basic and acidic residues). Positions 1–74 (MSQDENIVKA…AAAEDTAKDN (74 aa)) are disordered. At S2 the chain carries N-acetylserine. Position 14 is a phosphoserine (S14). Positions 37-74 (LQKEQEKQRKKEERALQLEAEREAREKKAAAEDTAKDN) are enriched in basic and acidic residues. E281 provides a ligand contact to L-aspartate. S301 bears the Phosphoserine mark. The interval 303–306 (QFNK) is aspartate. Position 325 (R325) interacts with L-aspartate. Residues 325–327 (RAE), 333–335 (RHM), and E478 each bind ATP. 2 residues coordinate L-aspartate: S481 and R485. S502 is subject to Phosphoserine. Residue 528 to 531 (GLER) participates in ATP binding. S546 carries the phosphoserine modification.

The protein belongs to the class-II aminoacyl-tRNA synthetase family. Type 2 subfamily. Homodimer.

It localises to the cytoplasm. The enzyme catalyses tRNA(Asp) + L-aspartate + ATP = L-aspartyl-tRNA(Asp) + AMP + diphosphate. The chain is Aspartate--tRNA ligase, cytoplasmic (DPS1) from Saccharomyces cerevisiae (strain ATCC 204508 / S288c) (Baker's yeast).